The chain runs to 94 residues: Putative toxin RelE4 (94 aa).

Belongs to the RelE toxin family.

Functionally, toxic component of a type II toxin-antitoxin (TA) system. Its cognate antitoxin is RelB4 (Potential). In Methanocaldococcus jannaschii (strain ATCC 43067 / DSM 2661 / JAL-1 / JCM 10045 / NBRC 100440) (Methanococcus jannaschii), this protein is Putative toxin RelE4 (relE4).